We begin with the raw amino-acid sequence, 138 residues long: MIEEKKELKKRRVLQMARFYGAAAFTLITMRLISRAIKVRKCNVPSIFQQNYKLPPFSQRNEAMSALTYASAASIGTFSTLIFGFCWALDISTAREFVFKTREFMSLPQALETDTSMDEETSKLTKQLQDLLSSENNK.

2 consecutive transmembrane segments (helical) span residues 17–34 (ARFYGAAAFTLITMRLIS) and 67–89 (LTYASAASIGTFSTLIFGFCWAL).

This sequence belongs to the AIM11 family.

It is found in the membrane. The polypeptide is Altered inheritance of mitochondria protein 11 (AIM11) (Saccharomyces cerevisiae (strain JAY291) (Baker's yeast)).